The chain runs to 697 residues: Polyribonucleotide nucleotidyltransferase (697 aa).

Residues Asp-487 and Asp-493 each contribute to the Mg(2+) site. The KH domain maps to 554-613 (PRIETIQIKPSKIAVVIGPGGKQIRAIIEQTGVQIDIDDTGLVNIAAIDLVSIEKAKAII). Residues 623 to 691 (GRIYSGKAIS…ERGQIKLSRK (69 aa)) form the S1 motif domain.

Belongs to the polyribonucleotide nucleotidyltransferase family. Mg(2+) is required as a cofactor.

The protein resides in the cytoplasm. The catalysed reaction is RNA(n+1) + phosphate = RNA(n) + a ribonucleoside 5'-diphosphate. Its function is as follows. Involved in mRNA degradation. Catalyzes the phosphorolysis of single-stranded polyribonucleotides processively in the 3'- to 5'-direction. The chain is Polyribonucleotide nucleotidyltransferase from Protochlamydia amoebophila (strain UWE25).